Consider the following 675-residue polypeptide: NADH-quinone oxidoreductase subunit G (675 aa).

In terms of domain architecture, 2Fe-2S ferredoxin-type spans 1–78 (MIKLIIDGSE…GMVIHTDTPM (78 aa)). C34, C45, C48, and C62 together coordinate [2Fe-2S] cluster. The region spanning 78 to 117 (MVKKAREGVMEFLLINHPLDCPICDQGGECDLQDQAFRYG) is the 4Fe-4S His(Cys)3-ligated-type domain. Positions 94, 98, 101, 107, 146, 149, 152, and 196 each coordinate [4Fe-4S] cluster. One can recognise a 4Fe-4S Mo/W bis-MGD-type domain in the interval 215–271 (LKHTASIGVHDAEGSNIRIDSRADEIMRILPRVNEAINEEWLSDKNRFCYDGLKYQR).

Belongs to the complex I 75 kDa subunit family. Requires [2Fe-2S] cluster as cofactor. The cofactor is [4Fe-4S] cluster.

It catalyses the reaction a quinone + NADH + 5 H(+)(in) = a quinol + NAD(+) + 4 H(+)(out). In terms of biological role, NDH-1 shuttles electrons from NADH, via FMN and iron-sulfur (Fe-S) centers, to quinones in the respiratory chain. Couples the redox reaction to proton translocation (for every two electrons transferred, four hydrogen ions are translocated across the cytoplasmic membrane), and thus conserves the redox energy in a proton gradient. This is NADH-quinone oxidoreductase subunit G (nuoG) from Rickettsia prowazekii (strain Madrid E).